Here is a 291-residue protein sequence, read N- to C-terminus: Protein/nucleic acid deglycase HchA (291 aa).

A compositionally biased stretch (basic and acidic residues) spans 1-18; it reads MSNERDTSRTPTPDHAEH. The segment at 1–24 is disordered; sequence MSNERDTSRTPTPDHAEHNAFFPS. Catalysis depends on Cys188, which acts as the Nucleophile.

The protein belongs to the peptidase C56 family. HchA subfamily.

The protein resides in the cytoplasm. The catalysed reaction is N(omega)-(1-hydroxy-2-oxopropyl)-L-arginyl-[protein] + H2O = lactate + L-arginyl-[protein] + H(+). The enzyme catalyses N(6)-(1-hydroxy-2-oxopropyl)-L-lysyl-[protein] + H2O = lactate + L-lysyl-[protein] + H(+). It carries out the reaction S-(1-hydroxy-2-oxopropyl)-L-cysteinyl-[protein] + H2O = lactate + L-cysteinyl-[protein] + H(+). It catalyses the reaction N(omega)-(1-hydroxy-2-oxoethyl)-L-arginyl-[protein] + H2O = L-arginyl-[protein] + glycolate + H(+). The catalysed reaction is N(6)-(1-hydroxy-2-oxoethyl)-L-lysyl-[protein] + H2O = glycolate + L-lysyl-[protein] + H(+). The enzyme catalyses S-(1-hydroxy-2-oxoethyl)-L-cysteinyl-[protein] + H2O = glycolate + L-cysteinyl-[protein] + H(+). It carries out the reaction N(2)-(1-hydroxy-2-oxopropyl)-dGTP + H2O = lactate + dGTP + H(+). It catalyses the reaction N(2)-(1-hydroxy-2-oxopropyl)-GTP + H2O = lactate + GTP + H(+). The catalysed reaction is N(2)-(1-hydroxy-2-oxopropyl)-GDP + H2O = lactate + GDP + H(+). The enzyme catalyses N(2)-(1-hydroxy-2-oxopropyl)-GMP + H2O = lactate + GMP + H(+). It carries out the reaction N(2)-(1-hydroxy-2-oxoethyl)-dGTP + H2O = dGTP + glycolate + H(+). It catalyses the reaction N(2)-(1-hydroxy-2-oxoethyl)-GTP + H2O = glycolate + GTP + H(+). The catalysed reaction is N(2)-(1-hydroxy-2-oxoethyl)-GDP + H2O = glycolate + GDP + H(+). The enzyme catalyses N(2)-(1-hydroxy-2-oxoethyl)-GMP + H2O = glycolate + GMP + H(+). It carries out the reaction an N(2)-(1-hydroxy-2-oxopropyl)-guanosine in RNA + H2O = a guanosine in RNA + lactate + H(+). It catalyses the reaction an N(2)-(1-hydroxy-2-oxopropyl)-2'-deoxyguanosine in DNA + H2O = a 2'-deoxyguanosine in DNA + lactate + H(+). The catalysed reaction is an N(2)-(1-hydroxy-2-oxoethyl)-guanosine in RNA + H2O = a guanosine in RNA + glycolate + H(+). The enzyme catalyses an N(2)-(1-hydroxy-2-oxoethyl)-2'-deoxyguanosine in DNA + H2O = a 2'-deoxyguanosine in DNA + glycolate + H(+). Protein and nucleotide deglycase that catalyzes the deglycation of the Maillard adducts formed between amino groups of proteins or nucleotides and reactive carbonyl groups of glyoxals. Thus, functions as a protein deglycase that repairs methylglyoxal- and glyoxal-glycated proteins, and releases repaired proteins and lactate or glycolate, respectively. Deglycates cysteine, arginine and lysine residues in proteins, and thus reactivates these proteins by reversing glycation by glyoxals. Acts on early glycation intermediates (hemithioacetals and aminocarbinols), preventing the formation of Schiff bases and advanced glycation endproducts (AGE). Also functions as a nucleotide deglycase able to repair glycated guanine in the free nucleotide pool (GTP, GDP, GMP, dGTP) and in DNA and RNA. Is thus involved in a major nucleotide repair system named guanine glycation repair (GG repair), dedicated to reversing methylglyoxal and glyoxal damage via nucleotide sanitization and direct nucleic acid repair. Plays an important role in protecting cells from carbonyl stress. This Pseudomonas aeruginosa (strain UCBPP-PA14) protein is Protein/nucleic acid deglycase HchA.